We begin with the raw amino-acid sequence, 239 residues long: 1-(5-phosphoribosyl)-5-[(5-phosphoribosylamino)methylideneamino] imidazole-4-carboxamide isomerase (239 aa).

The active-site Proton acceptor is aspartate 8. The active-site Proton donor is aspartate 129.

Belongs to the HisA/HisF family.

The protein resides in the cytoplasm. The catalysed reaction is 1-(5-phospho-beta-D-ribosyl)-5-[(5-phospho-beta-D-ribosylamino)methylideneamino]imidazole-4-carboxamide = 5-[(5-phospho-1-deoxy-D-ribulos-1-ylimino)methylamino]-1-(5-phospho-beta-D-ribosyl)imidazole-4-carboxamide. It participates in amino-acid biosynthesis; L-histidine biosynthesis; L-histidine from 5-phospho-alpha-D-ribose 1-diphosphate: step 4/9. This chain is 1-(5-phosphoribosyl)-5-[(5-phosphoribosylamino)methylideneamino] imidazole-4-carboxamide isomerase, found in Paramagnetospirillum magneticum (strain ATCC 700264 / AMB-1) (Magnetospirillum magneticum).